The chain runs to 337 residues: Tetraacyldisaccharide 4'-kinase (337 aa).

Position 51-58 (51-58 (HVGGAGKT)) interacts with ATP.

Belongs to the LpxK family.

It carries out the reaction a lipid A disaccharide + ATP = a lipid IVA + ADP + H(+). It participates in glycolipid biosynthesis; lipid IV(A) biosynthesis; lipid IV(A) from (3R)-3-hydroxytetradecanoyl-[acyl-carrier-protein] and UDP-N-acetyl-alpha-D-glucosamine: step 6/6. In terms of biological role, transfers the gamma-phosphate of ATP to the 4'-position of a tetraacyldisaccharide 1-phosphate intermediate (termed DS-1-P) to form tetraacyldisaccharide 1,4'-bis-phosphate (lipid IVA). The polypeptide is Tetraacyldisaccharide 4'-kinase (Afipia carboxidovorans (strain ATCC 49405 / DSM 1227 / KCTC 32145 / OM5) (Oligotropha carboxidovorans)).